We begin with the raw amino-acid sequence, 158 residues long: HTH-type transcriptional repressor NicR (158 aa).

Residues 20–152 form the HTH marR-type domain; it reads TEQVGHLLRK…ILYLLRKMID (133 aa). The segment at residues 66–89 is a DNA-binding region (H-T-H motif); that stretch reads QAELIKATAVDQATIRGIVERLKA.

The protein operates within cofactor degradation; nicotinate degradation [regulation]. Its function is as follows. Transcriptional repressor for the nicCDEFTP and nicXR operons, encoding the lower aerobic nicotinate degradation pathway. Acts under non-induced conditions: repression of the nicCDEFTP and nicXR operons becomes alleviated in presence of 6-hydroxynicotinate (6HNA). The protein is HTH-type transcriptional repressor NicR (nicR) of Pseudomonas putida (strain ATCC 47054 / DSM 6125 / CFBP 8728 / NCIMB 11950 / KT2440).